The sequence spans 164 residues: Ecotin (164 aa).

Positions 1-20 (MKMFVPAVVFAALASASAWA) are cleaved as a signal peptide. Cysteines 72 and 109 form a disulfide.

It belongs to the protease inhibitor I11 (ecotin) family. In terms of assembly, homodimer.

The protein localises to the periplasm. Its function is as follows. General inhibitor of pancreatic serine proteases: inhibits chymotrypsin, trypsin, elastases, factor X, kallikrein as well as a variety of other proteases. This is Ecotin from Salmonella typhi.